The primary structure comprises 65 residues: Chymotrypsin/elastase isoinhibitors 2 to 5 (65 aa).

5 cysteine pairs are disulfide-bonded: cysteine 4-cysteine 37, cysteine 13-cysteine 32, cysteine 16-cysteine 28, cysteine 20-cysteine 59, and cysteine 39-cysteine 53. A TIL domain is found at 4–59 (CGKNEVWTECTGCELKCGQDEKTPCALMCRPPSCECTPGRGMRRTHDGKCVPVSEC).

This sequence belongs to the serine protease inhibitor-like (TIL domain-containing) family.

It is found in the secreted. Functionally, defends the organism against the host's proteinases. This chain is Chymotrypsin/elastase isoinhibitors 2 to 5, found in Ascaris suum (Pig roundworm).